Consider the following 279-residue polypeptide: Urease accessory protein UreD (279 aa).

The protein belongs to the UreD family. As to quaternary structure, ureD, UreF and UreG form a complex that acts as a GTP-hydrolysis-dependent molecular chaperone, activating the urease apoprotein by helping to assemble the nickel containing metallocenter of UreC. The UreE protein probably delivers the nickel.

Its subcellular location is the cytoplasm. Its function is as follows. Required for maturation of urease via the functional incorporation of the urease nickel metallocenter. The protein is Urease accessory protein UreD of Streptococcus salivarius (strain 57.I).